Here is an 885-residue protein sequence, read N- to C-terminus: Initiator protein NS1 (885 aa).

The interval 404-477 (AEAGPSGTQP…GREDIFSGAP (74 aa)) is disordered. Polar residues predominate over residues 409 to 423 (SGTQPVETAQQSPPT). Over residues 452–465 (QAAGGSEMGAGGSA) the composition is skewed to gly residues.

This sequence belongs to the parvoviruses initiator protein NS1 family. In terms of assembly, homooligomer. Mg(2+) is required as a cofactor.

The protein resides in the host nucleus. The catalysed reaction is ATP + H2O = ADP + phosphate + H(+). Multifunctional protein which displays endonuclease and helicase activities required for initiating and directing viral DNA replication. Also plays a role in viral packaging and transactivation of several promoters. Binds site-specifically to 2-3 approximate tandem copies within the origins of replication (Ori), unwinds this hairpin region and nicks one DNA strand thereby initiating the rolling circle replication (RCR). The protein is Initiator protein NS1 of Bombyx mori densovirus (BmDNV).